The chain runs to 485 residues: Glutamate--tRNA ligase (485 aa).

The short motif at 11–21 is the 'HIGH' region element; it reads PSPTGHLHIGN. The short motif at 252–256 is the 'KMSKS' region element; it reads KLSKR. An ATP-binding site is contributed by K255.

Belongs to the class-I aminoacyl-tRNA synthetase family. Glutamate--tRNA ligase type 1 subfamily. As to quaternary structure, monomer.

The protein resides in the cytoplasm. It carries out the reaction tRNA(Glu) + L-glutamate + ATP = L-glutamyl-tRNA(Glu) + AMP + diphosphate. Functionally, catalyzes the attachment of glutamate to tRNA(Glu) in a two-step reaction: glutamate is first activated by ATP to form Glu-AMP and then transferred to the acceptor end of tRNA(Glu). The sequence is that of Glutamate--tRNA ligase from Bacillus cereus (strain ATCC 14579 / DSM 31 / CCUG 7414 / JCM 2152 / NBRC 15305 / NCIMB 9373 / NCTC 2599 / NRRL B-3711).